Consider the following 434-residue polypeptide: MPKTDIARRVYNHTWKLDPIIRSLLDTDFYKLLMLQMIWQLYPDVDATFSLINRTKTVRLAEEIDEQELRDQLDHARTLRFSKKEMIWLAGNTFYGRKQIFSPEFLSWLARFRLPEYELSRRDGQFELTFRGRWVETTMWEIPALAIINELRSRAAMKGLGPFTLDVLYARAKAKMWSKVEQLRQYPNLRISDFGTRRRHSFLWQRWCVEALKEGIGASFSGSSNVLLAMDNDLEALGTNAHELPMVAAALARNDKELAAAPYKVLQDWNQLYGGNLLIVLPDSFGTAAFLRNAPDWVADWTGFRPDSAPPVEGGEKILAWWKKKGRDPRDKLLIFSDGLDVDTIIKTYRHFEGRVRMSFGWGTNLTNDFAGCAPTEIGGLNPISIVCKVSEANGRPAVKLSDNPRKATGDPAEVERYLKFFGTEDFVEQTVRV.

His242 is subject to Phosphohistidine; by autocatalysis.

This sequence belongs to the NAPRTase family. Transiently phosphorylated on a His residue during the reaction cycle. Phosphorylation strongly increases the affinity for substrates and increases the rate of nicotinate D-ribonucleotide production. Dephosphorylation regenerates the low-affinity form of the enzyme, leading to product release.

It catalyses the reaction nicotinate + 5-phospho-alpha-D-ribose 1-diphosphate + ATP + H2O = nicotinate beta-D-ribonucleotide + ADP + phosphate + diphosphate. It functions in the pathway cofactor biosynthesis; NAD(+) biosynthesis; nicotinate D-ribonucleotide from nicotinate: step 1/1. Functionally, catalyzes the synthesis of beta-nicotinate D-ribonucleotide from nicotinate and 5-phospho-D-ribose 1-phosphate at the expense of ATP. This chain is Nicotinate phosphoribosyltransferase, found in Sinorhizobium fredii (strain NBRC 101917 / NGR234).